We begin with the raw amino-acid sequence, 349 residues long: Isopentenyl-diphosphate delta-isomerase (349 aa).

6-7 (RK) contacts substrate. FMN-binding positions include 62–64 (AMT), Ser93, and Asn122. Residue Gln152 participates in substrate binding. Glu153 is a binding site for Mg(2+). Residues Lys184, Thr214, 258–259 (GG), and 280–281 (AG) contribute to the FMN site.

The protein belongs to the IPP isomerase type 2 family. As to quaternary structure, homooctamer. Dimer of tetramers. Requires FMN as cofactor. The cofactor is NADPH. Mg(2+) is required as a cofactor.

The protein resides in the cytoplasm. The catalysed reaction is isopentenyl diphosphate = dimethylallyl diphosphate. Involved in the biosynthesis of isoprenoids. Catalyzes the 1,3-allylic rearrangement of the homoallylic substrate isopentenyl (IPP) to its allylic isomer, dimethylallyl diphosphate (DMAPP). The polypeptide is Isopentenyl-diphosphate delta-isomerase (Bacillus cereus (strain ATCC 10987 / NRS 248)).